A 264-amino-acid chain; its full sequence is Homeobox protein vent1 (264 aa).

Composition is skewed to basic and acidic residues over residues 16–26 (KEEATDGKDSM) and 44–59 (YAKE…DVQE). The disordered stretch occupies residues 16–140 (KEEATDGKDS…RLRTAFTPQQ (125 aa)). The segment covering 60–80 (HTTSFQCSLGEQVINRPSANP) has biased composition (polar residues). Positions 117-130 (TEQREKSPKSDLQR) are enriched in basic and acidic residues. The segment at residues 129-188 (QRRLRTAFTPQQISKLEQAFNKQRYLGAPERKKLATSLQLSEIQVKTWFQNRRMKLKRQI) is a DNA-binding region (homeobox).

Expressed in the ventral marginal zone of gastrulae. At stage 11.5, also expressed in the ventral region of the animal cap (ectoderm). At the end of gastrulation, predominantly localized to the ventral and lateral regions of the closing slit blastopore. At early tail bud stage, expression is maintained only in the forming proctodeum.

It is found in the nucleus. In terms of biological role, transcriptional repressor. Cooperates with vent2 in a ventral signaling pathway downstream of bmp4, which antagonizes the Spemann organizer and dorsal mesoderm formation, and leads to ventral mesoderm formation. Acts downstream of bmp4 to repress transcription of foxa4-B/XFD-1'. Binds to DNA with preference for the target sequence 5'-CTATT[T/C]G-3'. Also binds 5'-TGCATTTTG-3' at a lower frequency, and occasionally 5'-TTGATC-3'. Binds to the homeobox 2 (HBX2) repressor element in the promoter of the myf5 gene and represses myf5 transcription in the ventral domain. The protein is Homeobox protein vent1 (vent1) of Xenopus laevis (African clawed frog).